The primary structure comprises 519 residues: NADH-ubiquinone oxidoreductase chain 4 (519 aa).

14 consecutive transmembrane segments (helical) span residues Ser-2–Phe-22, Ile-68–Asp-88, Val-112–Ile-132, Leu-146–Leu-166, Leu-167–Gly-187, Phe-196–Met-216, Ile-239–Asn-259, Pro-270–Phe-290, Tyr-304–Leu-324, Ile-333–Ile-353, Ile-360–Val-380, Val-399–Leu-419, Leu-437–Tyr-457, and Phe-484–Ile-504.

Belongs to the complex I subunit 4 family.

Its subcellular location is the mitochondrion membrane. The enzyme catalyses a ubiquinone + NADH + 5 H(+)(in) = a ubiquinol + NAD(+) + 4 H(+)(out). In terms of biological role, core subunit of the mitochondrial membrane respiratory chain NADH dehydrogenase (Complex I) that is believed to belong to the minimal assembly required for catalysis. Complex I functions in the transfer of electrons from NADH to the respiratory chain. The immediate electron acceptor for the enzyme is believed to be ubiquinone. The sequence is that of NADH-ubiquinone oxidoreductase chain 4 (ND4) from Podospora anserina (strain S / ATCC MYA-4624 / DSM 980 / FGSC 10383) (Pleurage anserina).